A 277-amino-acid polypeptide reads, in one-letter code: Undecaprenyl-diphosphatase 2 (277 aa).

Transmembrane regions (helical) follow at residues 43–63 (RAMA…VWEF), 87–107 (LLIA…TIHE), 109–129 (LFNP…MLWA), 183–203 (AATE…AVYS), 214–234 (SDLP…MIAV), and 254–274 (IAFG…WTAA).

Belongs to the UppP family.

It localises to the cell inner membrane. It catalyses the reaction di-trans,octa-cis-undecaprenyl diphosphate + H2O = di-trans,octa-cis-undecaprenyl phosphate + phosphate + H(+). In terms of biological role, catalyzes the dephosphorylation of undecaprenyl diphosphate (UPP). Confers resistance to bacitracin. The sequence is that of Undecaprenyl-diphosphatase 2 from Pseudomonas fluorescens (strain Pf0-1).